The primary structure comprises 559 residues: Formate--tetrahydrofolate ligase (559 aa).

Residue 68–75 (TPAGEGKT) coordinates ATP.

This sequence belongs to the formate--tetrahydrofolate ligase family.

The enzyme catalyses (6S)-5,6,7,8-tetrahydrofolate + formate + ATP = (6R)-10-formyltetrahydrofolate + ADP + phosphate. The protein operates within one-carbon metabolism; tetrahydrofolate interconversion. The chain is Formate--tetrahydrofolate ligase from Rhizobium meliloti (strain 1021) (Ensifer meliloti).